The primary structure comprises 627 residues: (-)-beta-pinene synthase 1, chloroplastic (627 aa).

The N-terminal 50 residues, 1-50 (MDLISVLPSTSKSCVCLHKPLSSSTHKLKPFCRTIRILGMPRPRKSVLMA), are a transit peptide targeting the chloroplast. Mg(2+) contacts are provided by aspartate 378, aspartate 382, and aspartate 530. A DDXXD motif motif is present at residues 378 to 382 (DDMYD).

This sequence belongs to the terpene synthase family. Tpsd subfamily. The cofactor is Mg(2+). Mn(2+) serves as cofactor.

The protein localises to the plastid. It is found in the chloroplast. The enzyme catalyses (2E)-geranyl diphosphate = (1S,5S)-beta-pinene + diphosphate. It carries out the reaction (2E)-geranyl diphosphate = (1S,5S)-alpha-pinene + diphosphate. The protein operates within terpene metabolism; oleoresin biosynthesis. It participates in secondary metabolite biosynthesis; terpenoid biosynthesis. In terms of biological role, monoterpene synthase (TPS) involved in the biosynthesis of monoterpene natural products included in conifer oleoresin secretions and volatile emissions; these compounds contribute to biotic and abiotic stress defense against herbivores and pathogens. Catalyzes the conversion of (2E)-geranyl diphosphate (GPP) to (-)-beta-pinene and, to a lower extent, to (-)-alpha-pinene. The protein is (-)-beta-pinene synthase 1, chloroplastic of Pinus contorta (Shore pine).